Reading from the N-terminus, the 369-residue chain is Peptide chain release factor 2 (369 aa).

Gln251 carries the N5-methylglutamine modification.

This sequence belongs to the prokaryotic/mitochondrial release factor family. In terms of processing, methylated by PrmC. Methylation increases the termination efficiency of RF2.

The protein localises to the cytoplasm. Peptide chain release factor 2 directs the termination of translation in response to the peptide chain termination codons UGA and UAA. This chain is Peptide chain release factor 2 (prfB), found in Chlamydia muridarum (strain MoPn / Nigg).